The primary structure comprises 405 residues: GTPase Obg (405 aa).

An Obg domain is found at 1 to 159 (MKFVDEVSIF…RDLKLELKVL (159 aa)). Positions 127–148 (NTRFKSSTNRAPRQTTPGKPGE) are disordered. Over residues 129-143 (RFKSSTNRAPRQTTP) the composition is skewed to polar residues. The region spanning 160 to 333 (ADVGLLGLPN…LCQDIMHYLD (174 aa)) is the OBG-type G domain. GTP contacts are provided by residues 166-173 (GLPNAGKS), 191-195 (FTTLV), 213-216 (DIPG), 283-286 (NKAD), and 314-316 (SAL). The Mg(2+) site is built by serine 173 and threonine 193. Positions 383 to 398 (ALEDEDDFDDEDDGDG) are enriched in acidic residues. A disordered region spans residues 383-405 (ALEDEDDFDDEDDGDGPEIFYVR).

The protein belongs to the TRAFAC class OBG-HflX-like GTPase superfamily. OBG GTPase family. Monomer. Requires Mg(2+) as cofactor.

It localises to the cytoplasm. An essential GTPase which binds GTP, GDP and possibly (p)ppGpp with moderate affinity, with high nucleotide exchange rates and a fairly low GTP hydrolysis rate. Plays a role in control of the cell cycle, stress response, ribosome biogenesis and in those bacteria that undergo differentiation, in morphogenesis control. The polypeptide is GTPase Obg (Azotobacter vinelandii (strain DJ / ATCC BAA-1303)).